A 155-amino-acid chain; its full sequence is Ribosomal RNA large subunit methyltransferase H (155 aa).

S-adenosyl-L-methionine is bound by residues L72, G103, and 122-127 (LSALTL).

It belongs to the RNA methyltransferase RlmH family. Homodimer.

Its subcellular location is the cytoplasm. It catalyses the reaction pseudouridine(1915) in 23S rRNA + S-adenosyl-L-methionine = N(3)-methylpseudouridine(1915) in 23S rRNA + S-adenosyl-L-homocysteine + H(+). Functionally, specifically methylates the pseudouridine at position 1915 (m3Psi1915) in 23S rRNA. The chain is Ribosomal RNA large subunit methyltransferase H from Salmonella choleraesuis (strain SC-B67).